We begin with the raw amino-acid sequence, 37 residues long: SPTISITAPIDVLRKTWEQERARKQMVKNREFLNSLN.

Belongs to the sauvagine/corticotropin-releasing factor/urotensin I family.

It localises to the secreted. Functionally, stimulates fluid secretion by the Malpighian tubules. Increases cyclic AMP production. The sequence is that of Diuretic hormone 1 from Tenebrio molitor (Yellow mealworm beetle).